Here is a 481-residue protein sequence, read N- to C-terminus: Zinc metalloproteinase/disintegrin (481 aa).

Residues 1–20 (MIEVLLVTICLAVFPYQGSS) form the signal peptide. Residues 21-189 (IILESGNVND…KKASQLYLTP (169 aa)) constitute a propeptide that is removed on maturation. Glu-190 is subject to Pyrrolidone carboxylic acid (Glu). The Peptidase M12B domain maps to 197-392 (RYIKLAIVVD…DNPQCILNAP (196 aa)). 296–299 (RNTI) serves as a coordination point for an L-amino acid tripeptide. 3 disulfide bridges follow: Cys-308/Cys-387, Cys-349/Cys-371, and Cys-351/Cys-354. Residue His-333 participates in Zn(2+) binding. Residue Glu-334 is part of the active site. His-337 and His-343 together coordinate Zn(2+). Ser-357 contributes to the an L-amino acid tripeptide binding site. The propeptide occupies 393–410 (LRTDTVSTPVSGNEFLEA). The 82-residue stretch at 400–481 (TPVSGNEFLE…ADCPRNGLYG (82 aa)) folds into the Disintegrin domain. Disulfide bonds link Cys-414/Cys-429, Cys-416/Cys-424, Cys-423/Cys-446, Cys-437/Cys-443, Cys-442/Cys-467, and Cys-455/Cys-474. The short motif at 459 to 461 (RGD) is the Cell attachment site element.

The protein belongs to the venom metalloproteinase (M12B) family. P-II subfamily. P-IIa sub-subfamily. Monomer. Zn(2+) is required as a cofactor. Post-translationally, the N-terminus is blocked. Expressed by the venom gland.

The protein resides in the secreted. Inhibited by EDTA and 1,10-phenanthroline. Is also inhibited by endogenous tripeptide inhibitors pyroGlu-Asn-Trp, pyroGlu-Gln-Trp, and pyroGlu-Lys-Trp. Potent fibrinogenolytic protease which cleaves mainly the Aalpha chain of fibrinogen (FGA) and slightly the Bbeta (FGB) and the gamma (FGG) chains. May possess hemorrhagic activity. Compared to other SVMP, the substrate-binding pocket is relatively shallow. Is less susceptible to tripeptide inhibitors than TM-1 (AC U3KRG1) and TM-2. Its function is as follows. Inhibits platelet aggregation induced by ADP, thrombin, platelet-activating factor and collagen. Acts by inhibiting fibrinogen interaction with platelet receptors GPIIb/GPIIIa (ITGA2B/ITGB3). The polypeptide is Zinc metalloproteinase/disintegrin (Protobothrops mucrosquamatus (Taiwan habu)).